Here is a 276-residue protein sequence, read N- to C-terminus: MSRPIGIIDSGIGGLTVASEIMRQLPKEPIVYIGDSARCPYGPRPVEEVRAFTWQMIGRLLHEDVKMIVIACNTATAVVLEEARAQLDIPVVGVIRPGAISAIQVSENRHVAVIGTIGTIASNAYTMALHSIDENVTVESLACPLFVPLVEQGTIKGPEAEAVVRESLAPLQGAGFDTLILGCTHYPLLKPVIEACLPSVTVISSGEETAREVSSLLFYHSMNEQHQAKATHRFYTTGEANQFKQLAASWLNIHTDSVASIHLDGPLPVQATMKSK.

Residues 9-10 and 41-42 contribute to the substrate site; these read DS and YG. The active-site Proton donor/acceptor is the Cys72. Residue 73 to 74 participates in substrate binding; the sequence is NT. Cys183 functions as the Proton donor/acceptor in the catalytic mechanism. 184-185 contacts substrate; sequence TH.

This sequence belongs to the aspartate/glutamate racemases family.

The catalysed reaction is L-glutamate = D-glutamate. Its pathway is cell wall biogenesis; peptidoglycan biosynthesis. In terms of biological role, provides the (R)-glutamate required for cell wall biosynthesis. This is Glutamate racemase from Shouchella clausii (strain KSM-K16) (Alkalihalobacillus clausii).